We begin with the raw amino-acid sequence, 203 residues long: Methyltransferase-like 26 (203 aa).

Belongs to the UPF0585 family.

This Xenopus tropicalis (Western clawed frog) protein is Methyltransferase-like 26.